Reading from the N-terminus, the 399-residue chain is Rhodopsin, G0-coupled (399 aa).

Residues 1–17 (MPFPLNRTDTALVISPS) lie on the Extracellular side of the membrane. Residue asparagine 6 is glycosylated (N-linked (GlcNAc...) asparagine). A helical membrane pass occupies residues 18-43 (EFRIIGIFISICCIIGVLGNLLIIIV). Residues 44 to 55 (FAKRRSVRRPIN) are Cytoplasmic-facing. The chain crosses the membrane as a helical span at residues 56 to 81 (FFVLNLAVSDLIVALLGYPMTAASAF). The Extracellular segment spans residues 82–95 (SNRWIFDNIGCKIY). Cysteine 92 and cysteine 169 are disulfide-bonded. The helical transmembrane segment at 96–115 (AFLCFNSGVISIMTHAALSF) threads the bilayer. Topologically, residues 116–134 (CRYIIICQYGYRKKITQTT) are cytoplasmic. Residues 135 to 158 (VLRTLFSIWSFAMFWTLSPLFGWS) traverse the membrane as a helical segment. The Extracellular segment spans residues 159-182 (SYVIEVVPVSCSVNWYGHGLGDVS). Residues 183–210 (YTISVIVAVYVFPLSIIVFSYGMILQEK) traverse the membrane as a helical segment. At 211–240 (VCKDSRKNGIRAQQRYTPRFIQDIEQRVTF) the chain is on the cytoplasmic side. A helical membrane pass occupies residues 241-263 (ISFLMMAAFMVAWTPYAIMSALA). Residues 264 to 271 (IGSFNVEN) are Extracellular-facing. A helical membrane pass occupies residues 272–295 (SFAALPTLFAKASCAYNPFIYAFT). The residue at position 282 (lysine 282) is an N6-(retinylidene)lysine. At 296 to 399 (NANFRDTVVE…NTFTADFSVI (104 aa)) the chain is on the cytoplasmic side.

This sequence belongs to the G-protein coupled receptor 1 family. Opsin subfamily. In terms of processing, phosphorylated on some or all of the serine and threonine residues present in the C-terminal region. Retina. Expressed in the hyperpolarizing cell layer of the photoreceptor cells with its photoreceptive region adjacent to the lens.

It localises to the membrane. In terms of biological role, visual pigments are the light-absorbing molecules that mediate vision. They consist of an apoprotein, opsin, covalently linked to cis-retinal. This Mizuhopecten yessoensis (Japanese scallop) protein is Rhodopsin, G0-coupled (SCOP2).